Here is a 428-residue protein sequence, read N- to C-terminus: Elongation factor 1-alpha (428 aa).

The tr-type G domain occupies 5–217; sequence KPHVNIVFIG…DQIPEPEKPT (213 aa). Positions 14–21 are G1; sequence GHVDHGKS. A GTP-binding site is contributed by 14–21; that stretch reads GHVDHGKS. Ser21 is a binding site for Mg(2+). A G2 region spans residues 68 to 72; that stretch reads GITID. The tract at residues 89-92 is G3; the sequence is DAPG. GTP is bound by residues 89-93 and 144-147; these read DAPGH and NKMD. Positions 144–147 are G4; sequence NKMD. The interval 181-183 is G5; the sequence is SAW.

It belongs to the TRAFAC class translation factor GTPase superfamily. Classic translation factor GTPase family. EF-Tu/EF-1A subfamily.

The protein localises to the cytoplasm. The enzyme catalyses GTP + H2O = GDP + phosphate + H(+). In terms of biological role, GTP hydrolase that promotes the GTP-dependent binding of aminoacyl-tRNA to the A-site of ribosomes during protein biosynthesis. This Thermococcus sibiricus (strain DSM 12597 / MM 739) protein is Elongation factor 1-alpha.